Here is a 171-residue protein sequence, read N- to C-terminus: NADH-quinone oxidoreductase subunit B (171 aa).

[4Fe-4S] cluster-binding residues include cysteine 39, cysteine 40, cysteine 105, and cysteine 134.

Belongs to the complex I 20 kDa subunit family. As to quaternary structure, NDH-1 is composed of 14 different subunits. Subunits NuoB, C, D, E, F, and G constitute the peripheral sector of the complex. [4Fe-4S] cluster serves as cofactor.

The protein resides in the cell inner membrane. It carries out the reaction a quinone + NADH + 5 H(+)(in) = a quinol + NAD(+) + 4 H(+)(out). NDH-1 shuttles electrons from NADH, via FMN and iron-sulfur (Fe-S) centers, to quinones in the respiratory chain. The immediate electron acceptor for the enzyme in this species is believed to be ubiquinone. Couples the redox reaction to proton translocation (for every two electrons transferred, four hydrogen ions are translocated across the cytoplasmic membrane), and thus conserves the redox energy in a proton gradient. The protein is NADH-quinone oxidoreductase subunit B of Aliarcobacter butzleri (strain RM4018) (Arcobacter butzleri).